Here is a 260-residue protein sequence, read N- to C-terminus: Hydroxyethylthiazole kinase 1 (260 aa).

Met-39 is a substrate binding site. 2 residues coordinate ATP: Arg-115 and Thr-160. Position 187 (Gly-187) interacts with substrate.

The protein belongs to the Thz kinase family. Requires Mg(2+) as cofactor.

The enzyme catalyses 5-(2-hydroxyethyl)-4-methylthiazole + ATP = 4-methyl-5-(2-phosphooxyethyl)-thiazole + ADP + H(+). It functions in the pathway cofactor biosynthesis; thiamine diphosphate biosynthesis; 4-methyl-5-(2-phosphoethyl)-thiazole from 5-(2-hydroxyethyl)-4-methylthiazole: step 1/1. Functionally, catalyzes the phosphorylation of the hydroxyl group of 4-methyl-5-beta-hydroxyethylthiazole (THZ). This is Hydroxyethylthiazole kinase 1 from Streptococcus pneumoniae (strain Hungary19A-6).